A 508-amino-acid polypeptide reads, in one-letter code: Steroid 17-alpha-hydroxylase/17,20 lyase (508 aa).

Asparagine 202 contacts substrate. Cysteine 442 is a binding site for heme.

This sequence belongs to the cytochrome P450 family. The cofactor is heme.

The protein localises to the endoplasmic reticulum membrane. The protein resides in the microsome membrane. The enzyme catalyses a C21-steroid + reduced [NADPH--hemoprotein reductase] + O2 = a 17alpha-hydroxy-C21-steroid + oxidized [NADPH--hemoprotein reductase] + H2O + H(+). The catalysed reaction is progesterone + reduced [NADPH--hemoprotein reductase] + O2 = 17alpha-hydroxyprogesterone + oxidized [NADPH--hemoprotein reductase] + H2O + H(+). It catalyses the reaction pregnenolone + reduced [NADPH--hemoprotein reductase] + O2 = 17alpha-hydroxypregnenolone + oxidized [NADPH--hemoprotein reductase] + H2O + H(+). It carries out the reaction 17alpha-hydroxypregnenolone + reduced [NADPH--hemoprotein reductase] + O2 = 3beta-hydroxyandrost-5-en-17-one + acetate + oxidized [NADPH--hemoprotein reductase] + H2O + 2 H(+). It participates in steroid hormone biosynthesis. The protein operates within steroid biosynthesis; glucocorticoid biosynthesis. With respect to regulation, regulated predominantly by intracellular cAMP levels. The 17,20-lyase activity is stimulated by cytochrome b5, which acts as an allosteric effector increasing the Vmax of the lyase activity. A cytochrome P450 monooxygenase involved in corticoid and androgen biosynthesis. Catalyzes 17-alpha hydroxylation of C21 steroids, which is common for both pathways. A second oxidative step, required only for androgen synthesis, involves an acyl-carbon cleavage. Hydroxylates pregnenolone to form 17-alpha pregnenolone, followed by the cleavage of the C17-C20 bond to form dehydroepiandrosterone (DHEA). Has 17-alpha hydroxylase activity toward progesterone. The 17-alpha hydroxy intermediates, as part of adrenal glucocorticoids biosynthesis pathway, are precursors of cortisol. Mechanistically, uses molecular oxygen inserting one oxygen atom into a substrate, and reducing the second into a water molecule, with two electrons provided by NADPH via cytochrome P450 reductase (CPR; NADPH-ferrihemoprotein reductase). This chain is Steroid 17-alpha-hydroxylase/17,20 lyase (CYP17A1), found in Papio hamadryas ursinus (Chacma baboon).